Reading from the N-terminus, the 842-residue chain is Glycogen phosphorylase, muscle form (842 aa).

Residue Ser-2 is modified to N-acetylserine. The residue at position 15 (Ser-15) is a Phosphoserine; by PHK; in form phosphorylase A. AMP-binding residues include Asp-43 and Tyr-76. Tyr-204 and Tyr-227 each carry phosphotyrosine. Position 310–319 (Arg-310–Cys-319) interacts with AMP. A Phosphoserine modification is found at Ser-430. Tyr-473 carries the phosphotyrosine modification. Residue Ser-514 is modified to Phosphoserine. Lys-681 carries the post-translational modification N6-(pyridoxal phosphate)lysine. Phosphoserine occurs at positions 747 and 748.

The protein belongs to the glycogen phosphorylase family. As to quaternary structure, homodimer. Homotetramer; to form the enzymatically active phosphorylase A. The cofactor is pyridoxal 5'-phosphate. Phosphorylation of Ser-15 converts phosphorylase B (unphosphorylated) to phosphorylase A.

The catalysed reaction is [(1-&gt;4)-alpha-D-glucosyl](n) + phosphate = [(1-&gt;4)-alpha-D-glucosyl](n-1) + alpha-D-glucose 1-phosphate. Its activity is regulated as follows. Allosterically regulated through the non-covalent binding of metabolites, being activated by AMP and inhibited by ATP, ADP, and glucose-6-phosphate. The activity is also controlled by post-translational modifications including phosphorylation. Functionally, allosteric enzyme that catalyzes the rate-limiting step in glycogen catabolism, the phosphorolytic cleavage of glycogen to produce glucose-1-phosphate, and plays a central role in maintaining cellular and organismal glucose homeostasis. The protein is Glycogen phosphorylase, muscle form of Homo sapiens (Human).